The sequence spans 188 residues: Large ribosomal subunit protein uL6 (188 aa).

It belongs to the universal ribosomal protein uL6 family. Part of the 50S ribosomal subunit.

Functionally, this protein binds to the 23S rRNA, and is important in its secondary structure. It is located near the subunit interface in the base of the L7/L12 stalk, and near the tRNA binding site of the peptidyltransferase center. The chain is Large ribosomal subunit protein uL6 from Myxococcus xanthus (strain DK1622).